A 327-amino-acid polypeptide reads, in one-letter code: Probable cell division protein WhiA (327 aa).

The segment at residues 275–308 (SLEELGRLADPQMTKDAVAGRIRRLLTMADKRAE) is a DNA-binding region (H-T-H motif).

Belongs to the WhiA family.

Functionally, involved in cell division and chromosome segregation. The sequence is that of Probable cell division protein WhiA from Corynebacterium glutamicum (strain ATCC 13032 / DSM 20300 / JCM 1318 / BCRC 11384 / CCUG 27702 / LMG 3730 / NBRC 12168 / NCIMB 10025 / NRRL B-2784 / 534).